Reading from the N-terminus, the 123-residue chain is Ig heavy chain V region H8 (123 aa).

Residues 1 to 114 (EVKLVESGGG…BSYWYFDVWG (114 aa)) form the Ig-like domain.

The chain is Ig heavy chain V region H8 from Mus musculus (Mouse).